The chain runs to 204 residues: Large ribosomal subunit protein eL15 (204 aa).

This sequence belongs to the eukaryotic ribosomal protein eL15 family.

The chain is Large ribosomal subunit protein eL15 (RPL15) from Tetrahymena thermophila (strain SB210).